A 673-amino-acid polypeptide reads, in one-letter code: Polyunsaturated fatty acid 5-lipoxygenase (673 aa).

In terms of domain architecture, PLAT spans Pro-2–Lys-117. Ca(2+) is bound by residues Gly-17, Thr-18, Asp-19, Asn-44, Asp-45, Glu-47, Asp-79, and Asp-80. The Lipoxygenase domain maps to Leu-118 to Ile-673. Ser-271 bears the Phosphoserine mark. Residues His-367 and His-372 each contribute to the Fe cation site. The residue at position 523 (Ser-523) is a Phosphoserine. Positions 550, 554, and 673 each coordinate Fe cation.

It belongs to the lipoxygenase family. Homodimer. Interacts with ALOX5AP and LTC4S. Interacts with COTL1, the interaction is required for stability and efficient catalytic activity. Interacts with PIK3R1; this interaction bridges ALOX5 with CD40 after CD40 ligation in B cells and leads to the production of reactive oxygen species (ROS). Interacts (via PLAT domain) with DICER1 (via Dicer dsRNA-binding fold domain); this interaction enhances arachidonate 5-lipoxygenase activity and modifies the miRNA precursor processing activity of DICER1. It depends on Fe cation as a cofactor. Post-translationally, serine phosphorylation by MAPKAPK2 is stimulated by arachidonic acid. Phosphorylation on Ser-523 by PKA has an inhibitory effect. Phosphorylation on Ser-271 prevents export from the nucleus. Phosphorylation at Ser-523 is stimulated by 8-bromo-3',5'-cyclic AMP or prostaglandin E2.

The protein localises to the cytoplasm. It is found in the nucleus matrix. It localises to the nucleus membrane. Its subcellular location is the perinuclear region. The protein resides in the cytosol. The protein localises to the nucleus envelope. It is found in the nucleus intermembrane space. The enzyme catalyses (5Z,8Z,11Z,14Z)-eicosatetraenoate + O2 = leukotriene A4 + H2O. It carries out the reaction 18-HEPE + O2 = (5S)-hydroperoxy-18-hydroxy-(7E,9E,11Z,14Z,16E)-eicosapentaenoate. It catalyses the reaction (18R)-hydroxy-(5Z,8Z,11Z,14Z,16E)-eicosapentaenoate + O2 = (5S)-hydroperoxy-(18R)-hydroxy-(6E,8Z,11Z,14Z,16E)-eicosapentaenoate. The catalysed reaction is (18S)-hydroxy-(5Z,8Z,11Z,14Z,16E)-eicosapentaenoate + O2 = (5S)-hydroperoxy-(18S)-hydroxy-(6E,8Z,11Z,14Z,16E)-eicosapentaenoate. The enzyme catalyses (5S)-hydroperoxy-(18S)-hydroxy-(6E,8Z,11Z,14Z,16E)-eicosapentaenoate = (5S,6S)-epoxy-(18S)-hydroxy-(7E,9E,11Z,14Z,16E)-eicosapentaenoate + H2O. It carries out the reaction (5S)-hydroperoxy-(18R)-hydroxy-(6E,8Z,11Z,14Z,16E)-eicosapentaenoate = (5S,6S)-epoxy-(18R)-hydroxy-(7E,9E,11Z,14Z,16E)-eicosapentaenoate + H2O. It catalyses the reaction (5S)-hydroperoxy-18-hydroxy-(7E,9E,11Z,14Z,16E)-eicosapentaenoate = (5S,6S)-epoxy-18-hydroxy-(7E,9E,11Z,14Z,16E)-eicosapentaenoate + H2O. The catalysed reaction is (5Z,8Z,11Z,14Z)-eicosatetraenoate + O2 = (5S)-hydroperoxy-(6E,8Z,11Z,14Z)-eicosatetraenoate. The enzyme catalyses (15S)-hydroxy-(5Z,8Z,11Z,13E)-eicosatetraenoate + O2 = (5S)-hydroperoxy-(15S)-hydroxy-(6E,8Z,11Z,13E)-eicosatetraenoate. It carries out the reaction (5S)-hydroperoxy-(6E,8Z,11Z,14Z)-eicosatetraenoate = leukotriene A4 + H2O. It catalyses the reaction (5Z,8Z,11Z,14Z)-eicosatetraenoate + O2 = (8S)-hydroperoxy-(5Z,9E,11Z,14Z)-eicosatetraenoate. The catalysed reaction is (5Z,8Z,11Z,14Z)-eicosatetraenoate + O2 = (12S)-hydroperoxy-(5Z,8Z,10E,14Z)-eicosatetraenoate. The enzyme catalyses (5Z,8Z)-eicosadienoate + O2 = (5S)-hydroperoxy-(6E,8Z)-eicosadienoate. It carries out the reaction (12S)-hydroxy-(5Z,8Z,10E,14Z)-eicosatetraenoate + O2 = (5S)-hydroperoxy-(12S)-hydroxy-(6E,8Z,10E,14Z)-eicosatetraenoate. It catalyses the reaction (5Z,8Z,11Z,14Z,17Z)-eicosapentaenoate + O2 = 5-hydroperoxy-(6E,8Z,11Z,14Z,17Z)-eicosapentaenoate. The catalysed reaction is (4Z,7Z,10Z,13Z,16Z,19Z)-docosahexaenoate + O2 = (14S)-hydroperoxy-(4Z,7Z,10Z,12E,16Z,19Z)-docosahexaenoate. The enzyme catalyses (4Z,7Z,10Z,13Z,16Z,19Z)-docosahexaenoate + O2 = (7S)-hydroperoxy-(4Z,8E,10Z,13Z,16Z,19Z)-docosahexaenoate. It carries out the reaction (4Z,7Z,10Z,13Z,16Z,19Z)-docosahexaenoate + O2 = (17S)-hydroperoxy-(4Z,7Z,10Z,13Z,15E,19Z)-docosahexaenoate. It participates in lipid metabolism; leukotriene A4 biosynthesis. Functionally, catalyzes the oxygenation of arachidonate to 5-hydroperoxyeicosatetraenoate (5-HPETE) followed by the dehydration to 5,6- epoxyeicosatetraenoate (Leukotriene A4/LTA4), the first two steps in the biosynthesis of leukotrienes, which are potent mediators of inflammation. Also catalyzes the oxygenation of arachidonate into 8-hydroperoxyicosatetraenoate (8-HPETE) and 12-hydroperoxyicosatetraenoate (12-HPETE). Displays lipoxin synthase activity being able to convert (15S)-HETE into a conjugate tetraene. Although arachidonate is the preferred substrate, this enzyme can also metabolize oxidized fatty acids derived from arachidonate such as (15S)-HETE, eicosapentaenoate (EPA) such as (18R)- and (18S)-HEPE or docosahexaenoate (DHA) which lead to the formation of specialized pro-resolving mediators (SPM) lipoxin and resolvins E and D respectively, therefore it participates in anti-inflammatory responses. Oxidation of DHA directly inhibits endothelial cell proliferation and sprouting angiogenesis via peroxisome proliferator-activated receptor gamma (PPARgamma). It does not catalyze the oxygenation of linoleic acid and does not convert (5S)-HETE to lipoxin isomers. In addition to inflammatory processes, it participates in dendritic cell migration, wound healing through an antioxidant mechanism based on heme oxygenase-1 (HO-1) regulation expression, monocyte adhesion to the endothelium via ITGAM expression on monocytes. Moreover, it helps establish an adaptive humoral immunity by regulating primary resting B cells and follicular helper T cells and participates in the CD40-induced production of reactive oxygen species (ROS) after CD40 ligation in B cells through interaction with PIK3R1 that bridges ALOX5 with CD40. May also play a role in glucose homeostasis, regulation of insulin secretion and palmitic acid-induced insulin resistance via AMPK. Can regulate bone mineralization and fat cell differentiation increases in induced pluripotent stem cells. This chain is Polyunsaturated fatty acid 5-lipoxygenase, found in Mesocricetus auratus (Golden hamster).